Here is a 97-residue protein sequence, read N- to C-terminus: UPF0235 protein Daro_3887 (97 aa).

This sequence belongs to the UPF0235 family.

This Dechloromonas aromatica (strain RCB) protein is UPF0235 protein Daro_3887.